The primary structure comprises 61 residues: Alpha-conotoxine-like Am1.3 (61 aa).

Positions 1–21 are cleaved as a signal peptide; that stretch reads MGMRMMFTVFLLVVLATTVVS. Residues 22–44 constitute a propeptide that is removed on maturation; it reads FMSGRASHGRNAAASDLIALTIK. Cysteine amide is present on Cys60.

The protein belongs to the conotoxin A superfamily. In terms of processing, is not hydroxylated. Contains 2 disulfide bonds. In terms of tissue distribution, expressed by the venom duct.

Its subcellular location is the secreted. In terms of biological role, alpha-conotoxins act on postsynaptic membranes, they bind to the nicotinic acetylcholine receptors (nAChR) and thus inhibit them. The protein is Alpha-conotoxine-like Am1.3 of Conus amadis (Amadis cone).